The chain runs to 207 residues: Ribonuclease HII (207 aa).

An RNase H type-2 domain is found at 12–201 (DLVAGVDEVG…VRAAWEAREG (190 aa)). The a divalent metal cation site is built by Asp18, Glu19, and Asp110.

The protein belongs to the RNase HII family. It depends on Mn(2+) as a cofactor. Requires Mg(2+) as cofactor.

The protein resides in the cytoplasm. It carries out the reaction Endonucleolytic cleavage to 5'-phosphomonoester.. In terms of biological role, endonuclease that specifically degrades the RNA of RNA-DNA hybrids. The sequence is that of Ribonuclease HII from Pseudomonas putida (strain W619).